Reading from the N-terminus, the 92-residue chain is Large ribosomal subunit protein eL43 (92 aa).

Cysteine 39, cysteine 42, cysteine 57, and cysteine 60 together coordinate Zn(2+). A C4-type zinc finger spans residues 39-60; sequence CPVCGFPKLKRASTSIWVCGKC.

It belongs to the eukaryotic ribosomal protein eL43 family. Putative zinc-binding subfamily. As to quaternary structure, part of the 50S ribosomal subunit. It depends on Zn(2+) as a cofactor.

In terms of biological role, binds to the 23S rRNA. The polypeptide is Large ribosomal subunit protein eL43 (Methanocaldococcus jannaschii (strain ATCC 43067 / DSM 2661 / JAL-1 / JCM 10045 / NBRC 100440) (Methanococcus jannaschii)).